The primary structure comprises 297 residues: Non-homologous end-joining factor 1 (297 aa).

The tract at residues 1-131 is globular head; that stretch reads MDARLLQLPW…ATVSTVCRHL (131 aa). The C-terminal tail stretch occupies residues 220 to 286; that stretch reads PKAPTHPKEE…LTHRPPAGAS (67 aa). Residues 222–297 are disordered; that stretch reads APTHPKEEDT…PKKKAKGLFM (76 aa). Polar residues predominate over residues 232–255; sequence GNSASHRPMAESSSISFEKTVPTQ. Low complexity predominate over residues 263 to 286; that stretch reads VSEPSQVPQSSVSCLTHRPPAGAS. The short motif at 287 to 297 is the XLM element; the sequence is KPKKKAKGLFM. Over residues 287-297 the composition is skewed to basic residues; it reads KPKKKAKGLFM.

This sequence belongs to the XRCC4-XLF family. XLF subfamily. As to quaternary structure, homodimer. Interacts with xrcc4; the interaction is direct and is mediated via a head-to-head interaction between N-terminal head regions. Component of the core long-range non-homologous end joining (NHEJ) complex (also named DNA-PK complex) composed of prkdc/DNA-PKcs, lig4, xrcc4, xrcc6/Ku70, xrcc5/Ku80 and nhej1/xlf.

It is found in the nucleus. Functionally, DNA repair protein involved in DNA non-homologous end joining (NHEJ); required for double-strand break (DSB) repair and V(D)J recombination. It is also involved in telomere maintenance. Plays a key role in NHEJ by promoting the ligation of various mismatched and non-cohesive ends. In some studies, has been shown to associate with xrcc4 to form alternating helical filaments that bridge DNA and act like a bandage, holding together the broken DNA until it is repaired. Alternatively, it has also been shown that rather than forming filaments, a single nhej1 dimer interacts through both head domains with xrcc4 to promote the close alignment of DNA ends. The xrcc4-nhej1/xlf subcomplex binds to the DNA fragments of a DSB in a highly diffusive manner and robustly bridges two independent DNA molecules, holding the broken DNA fragments in close proximity to one other. The mobility of the bridges ensures that the ends remain accessible for further processing by other repair factors. In Xenopus laevis (African clawed frog), this protein is Non-homologous end-joining factor 1.